The chain runs to 118 residues: uncharacterized protein (118 aa).

A helical transmembrane segment spans residues 95–115 (IIINLVIILAMYAPEIIGKLL).

Belongs to the M.jannaschii MJ0023/MJ0349/MJ1072/MJ1074/MJ1107/MJECL16 family.

The protein resides in the membrane. This is an uncharacterized protein from Methanocaldococcus jannaschii (strain ATCC 43067 / DSM 2661 / JAL-1 / JCM 10045 / NBRC 100440) (Methanococcus jannaschii).